We begin with the raw amino-acid sequence, 384 residues long: WD repeat-containing protein 74 (384 aa).

6 WD repeats span residues 40-80 (RREE…FLSQ), 83-122 (CPGG…ASSD), 128-168 (KVGP…EPVF), 179-220 (DLRV…RRPV), 224-266 (TYGE…GCLK), and 267-306 (GLAG…GLEH). Ser-214 carries the phosphoserine modification. Lys-311 is subject to N6-methyllysine. The tract at residues 320 to 384 (SGRDNWEDEP…KKKRPGSTSP (65 aa)) is required for nucleolar and nuclear location. The tract at residues 323–384 (DNWEDEPQEP…KKKRPGSTSP (62 aa)) is disordered. A compositionally biased stretch (basic residues) spans 371 to 384 (QRRKKKKRPGSTSP).

Isoform 1 interacts (through WDR repeats) with NVL; the interaction is independent of RNA or pre-60S ribosome particles. Isoform 2 does not interact with NVL. Interacts with MTREX; the interaction dissociation in a late stage of rRNA synthesis is required for appropriate maturation of pre-60S particles and depends on the ATPase activity of NVL.

The protein resides in the nucleus. It is found in the nucleolus. Regulatory protein of the MTREX-exosome complex involved in the synthesis of the 60S ribosomal subunit. Participates in an early cleavage of the pre-rRNA processing pathway in cooperation with NVL. Required for blastocyst formation, is necessary for RNA transcription, processing and/or stability during preimplantation development. This Mus musculus (Mouse) protein is WD repeat-containing protein 74 (Wdr74).